We begin with the raw amino-acid sequence, 437 residues long: Phosphomethylpyrimidine synthase (437 aa).

Substrate is bound by residues asparagine 69, methionine 98, tyrosine 127, histidine 163, serine 185–glycine 187, aspartate 226–arginine 229, and glutamate 265. Position 269 (histidine 269) interacts with Zn(2+). Substrate is bound at residue tyrosine 292. Residue histidine 333 coordinates Zn(2+). [4Fe-4S] cluster-binding residues include cysteine 409, cysteine 412, and cysteine 416.

This sequence belongs to the ThiC family. [4Fe-4S] cluster serves as cofactor.

The catalysed reaction is 5-amino-1-(5-phospho-beta-D-ribosyl)imidazole + S-adenosyl-L-methionine = 4-amino-2-methyl-5-(phosphooxymethyl)pyrimidine + CO + 5'-deoxyadenosine + formate + L-methionine + 3 H(+). It participates in cofactor biosynthesis; thiamine diphosphate biosynthesis. Functionally, catalyzes the synthesis of the hydroxymethylpyrimidine phosphate (HMP-P) moiety of thiamine from aminoimidazole ribotide (AIR) in a radical S-adenosyl-L-methionine (SAM)-dependent reaction. The protein is Phosphomethylpyrimidine synthase of Clostridium botulinum (strain Langeland / NCTC 10281 / Type F).